The primary structure comprises 389 residues: Ribonucleoside-diphosphate reductase subunit M2 (389 aa).

S20 is subject to Phosphoserine. A Phosphothreonine modification is found at T33. A Cy motif is present at residues R49 to I51. 3 residues coordinate Fe cation: D138, E169, and H172. Residue Y176 is part of the active site. E232, E266, and H269 together coordinate Fe cation.

This sequence belongs to the ribonucleoside diphosphate reductase small chain family. In terms of assembly, heterodimer of a large and a small subunit. Interacts (via Cy motif and when phosphorylated at Thr-33) with CCNF; the interaction occurs exclusively in G2 and early M. Fe cation is required as a cofactor. In terms of processing, phosphorylation on Ser-20 relieves the inhibitory effect on Wnt signaling. Phosphorylated on Thr-33 by CDK1 and CDK2; predominantly in G2 and M phase. Ubiquitinated by the SCF(CCNF) E3 ubiquitin-protein ligase complex; leading to its degradation by the proteasome.

The protein localises to the cytoplasm. It is found in the nucleus. It catalyses the reaction a 2'-deoxyribonucleoside 5'-diphosphate + [thioredoxin]-disulfide + H2O = a ribonucleoside 5'-diphosphate + [thioredoxin]-dithiol. Provides the precursors necessary for DNA synthesis. Catalyzes the biosynthesis of deoxyribonucleotides from the corresponding ribonucleotides. Inhibits Wnt signaling. The protein is Ribonucleoside-diphosphate reductase subunit M2 (RRM2) of Macaca fascicularis (Crab-eating macaque).